The primary structure comprises 692 residues: Glycine--tRNA ligase beta subunit (692 aa).

It belongs to the class-II aminoacyl-tRNA synthetase family. As to quaternary structure, tetramer of two alpha and two beta subunits.

It localises to the cytoplasm. The enzyme catalyses tRNA(Gly) + glycine + ATP = glycyl-tRNA(Gly) + AMP + diphosphate. The polypeptide is Glycine--tRNA ligase beta subunit (Alteromonas mediterranea (strain DSM 17117 / CIP 110805 / LMG 28347 / Deep ecotype)).